Consider the following 160-residue polypeptide: Ribosomal RNA large subunit methyltransferase H (160 aa).

Glycine 108 contacts S-adenosyl-L-methionine.

It belongs to the RNA methyltransferase RlmH family. Homodimer.

It localises to the cytoplasm. The enzyme catalyses pseudouridine(1915) in 23S rRNA + S-adenosyl-L-methionine = N(3)-methylpseudouridine(1915) in 23S rRNA + S-adenosyl-L-homocysteine + H(+). Functionally, specifically methylates the pseudouridine at position 1915 (m3Psi1915) in 23S rRNA. This chain is Ribosomal RNA large subunit methyltransferase H, found in Rhodopseudomonas palustris (strain BisA53).